We begin with the raw amino-acid sequence, 95 residues long: MKLVILLVVVSAMLVLGGAQTASQFYCGDFLARTMSILCWPDMPKRSGSQYAGYGWPWLPPFSSSRGKRGIVDECCYRPCTTDVLKLYCDKQITI.

A signal peptide spans 1 to 19 (MKLVILLVVVSAMLVLGGA). Gln-20 carries the post-translational modification Pyrrolidone carboxylic acid. 3 disulfide bridges follow: Cys-27–Cys-76, Cys-39–Cys-89, and Cys-75–Cys-80. Residues 47–67 (SGSQYAGYGWPWLPPFSSSRG) constitute a propeptide, c peptide like.

Belongs to the insulin family. Heterodimer of a B chain and an A chain linked by two disulfide bonds.

Its subcellular location is the secreted. Functionally, brain peptide responsible for activation of prothoracic glands to produce ecdysone in insects. The polypeptide is Bombyxin C-2 (BBXC2) (Bombyx mori (Silk moth)).